A 149-amino-acid chain; its full sequence is Cytochrome c-type biogenesis protein CcmE (149 aa).

Topologically, residues 1 to 7 (MKKRHQR) are cytoplasmic. A helical; Signal-anchor for type II membrane protein transmembrane segment spans residues 8–28 (LFLVLGVVAGVSVATALVLNA). The Periplasmic portion of the chain corresponds to 29 to 149 (FRDNMTFFIT…EHSVDEVGDY (121 aa)). Heme contacts are provided by His-123 and Tyr-127.

The protein belongs to the CcmE/CycJ family.

It localises to the cell inner membrane. Heme chaperone required for the biogenesis of c-type cytochromes. Transiently binds heme delivered by CcmC and transfers the heme to apo-cytochromes in a process facilitated by CcmF and CcmH. This is Cytochrome c-type biogenesis protein CcmE from Halorhodospira halophila (strain DSM 244 / SL1) (Ectothiorhodospira halophila (strain DSM 244 / SL1)).